We begin with the raw amino-acid sequence, 1603 residues long: Gag-Pol polyprotein (1603 aa).

The segment covering 128-141 (VGETTVQRDAKMAP) has biased composition (basic and acidic residues). The tract at residues 128–150 (VGETTVQRDAKMAPEETATPKTV) is disordered. The short motif at 172 to 175 (PPPY) is the PPXY motif element. The short motif at 180 to 184 (LYPSL) is the LYPX(n)L motif element. A disordered region spans residues 181–215 (YPSLAGVGEQQGQGGDTPRGAEQPRAEPGHAGLAP). The short motif at 219–229 (LTDWARIREEL) is the Nuclear export signal element. 2 consecutive CCHC-type zinc fingers follow at residues 507-524 (RLCY…QCPK) and 533-550 (ERCQ…QCRR). The disordered stretch occupies residues 544 to 571 (NAKQCRRRDSNQGQRPGRGLSSGPWPVS). The Peptidase A2 domain occupies 609 to 690 (ITALLDSGAD…VRGSILGRDC (82 aa)). Asp614 acts as the For protease activity; shared with dimeric partner in catalysis. Positions 750-938 (LQLGHIEPSL…PGVQYLGYKL (189 aa)) constitute a Reverse transcriptase domain. Residues Asp815, Asp890, Asp891, Asp1158, Glu1192, Asp1213, and Asp1272 each contribute to the Mg(2+) site. Residues 1149 to 1280 (PVPGPTVFTD…ADSQATFQAY (132 aa)) enclose the RNase H type-1 domain. An Integrase-type zinc finger spans residues 1280-1321 (YPLREAKDLHTTLHIGPRALSKACNISMQQAREVVQTCPHCN). Zn(2+)-binding residues include His1289, His1293, Cys1317, and Cys1320. Positions 1333 to 1496 (RGLGPLQIWQ…TPVQKHWRPT (164 aa)) constitute an Integrase catalytic domain. Residues Asp1344, Asp1401, and Glu1437 each contribute to the Mg(2+) site. The segment at residues 1502-1550 (PPVKIRIETGEWEKGWNVLVWGRGYAAVKNRDTDKVIWVPSRKVKPDIT) is a DNA-binding region (integrase-type). The segment at 1548–1567 (DITQKDEVTKKDEASPLFAG) is involved in homooctamerization. The segment covering 1549–1561 (ITQKDEVTKKDEA) has biased composition (basic and acidic residues). A disordered region spans residues 1549–1603 (ITQKDEVTKKDEASPLFAGSSDWIPWGDEQEGLQEEAASNKQEGPGEDTLAANES).

Active as a homodimer. In terms of assembly, homodimer. Homomultimer. Homohexamer. As to quaternary structure, homodimer; further associates as a homooctamer. Heterodimer of alpha and beta subunits. Three forms of RT exist: alpha-alpha (alpha-Pol), beta-beta (beta-Pol), and alpha-beta, with the major form being the heterodimer. Both the polymerase and RNase H active sites are located in the alpha subunit of heterodimeric RT alpha-beta. Mg(2+) is required as a cofactor. Requires Mn(2+) as cofactor. Post-translationally, specific enzymatic cleavages in vivo yield mature proteins. In terms of processing, capsid protein p27: The cleavage at the C-terminus is slowly trimmed by the viral protease, sometimes being cut internally thereby generating the short version of the capsid protein and a capsid protein C-terminally extended by 3 amino acids in a ratio of 2:1.

The protein localises to the virion. The enzyme catalyses DNA(n) + a 2'-deoxyribonucleoside 5'-triphosphate = DNA(n+1) + diphosphate. The catalysed reaction is Endonucleolytic cleavage to 5'-phosphomonoester.. Its function is as follows. Capsid protein p27: Self-associates to form the irregular polyhedron core composed of hexamers and pentamers, that encapsulates the genomic RNA-nucleocapsid complex. Assembles as a tube in vitro. Binds to inositol hexakisphosphate (IP6), which allows the assembly of the polyhedral capsid. In terms of biological role, plays a role in the oligomerization of the Gag polyprotein and in the stabilization of the immature particle. Essential layering element during tube assembly. Allows the cooperative binging of Gag to the host plasma membrane. Binds strongly to viral nucleic acids and promotes their packaging. Plays a role in the maturation-stabilization of the viral dimeric RNA via highly structured zinc-binding motifs. Functionally, the aspartyl protease mediates proteolytic cleavages of Gag and Gag-Pol polyproteins during or shortly after the release of the virion from the plasma membrane. Cleavages take place as an ordered, step-wise cascade to yield mature proteins. This process is called maturation. Displays maximal activity during the budding process just prior to particle release from the cell. Its function is as follows. Catalyzes viral DNA integration into the host chromosome, by performing a series of DNA cutting and joining reactions. This recombination event is an essential step in the viral replication cycle. Has a strong preference for using the 3'-OH at the viral DNA end as a nucleophile. This chain is Gag-Pol polyprotein (gag-pol), found in Rous sarcoma virus subgroup B (strain Schmidt-Ruppin) (RSV-SR-B).